Here is a 546-residue protein sequence, read N- to C-terminus: Cysteine--tRNA ligase (546 aa).

Residue cysteine 57 coordinates Zn(2+). A 'HIGH' region motif is present at residues 59–69 (ATVQSSPHIGH). The interval 211–236 (PSVDATGADKYNPVDPADASPDKHDP) is disordered. 3 residues coordinate Zn(2+): cysteine 270, histidine 295, and glutamate 299. A 'KMSKS' region motif is present at residues 326 to 330 (KMSKS). Position 329 (lysine 329) interacts with ATP.

This sequence belongs to the class-I aminoacyl-tRNA synthetase family. As to quaternary structure, monomer. Zn(2+) serves as cofactor.

Its subcellular location is the cytoplasm. It carries out the reaction tRNA(Cys) + L-cysteine + ATP = L-cysteinyl-tRNA(Cys) + AMP + diphosphate. The protein is Cysteine--tRNA ligase of Bifidobacterium longum (strain NCC 2705).